The chain runs to 552 residues: Putative phosphate permease MT2339 (552 aa).

The next 13 membrane-spanning stretches (helical) occupy residues 38–58 (WHLS…WWAF), 69–89 (ILVL…GNDV), 107–127 (ALLV…GDVT), 146–166 (DFMN…LFAN), 178–198 (IIGG…QGGA), 213–233 (VSWV…YGVI), 326–346 (VPLV…FKGF), 360–380 (FIIA…AKTL), 389–409 (TFLM…FSHG), 437–457 (AVPA…LWFI), 472–492 (MHPA…MGAT), 493–513 (VLGL…GVGI), and 526–546 (IVLA…VGLV).

Belongs to the inorganic phosphate transporter (PiT) (TC 2.A.20) family.

Its subcellular location is the cell membrane. Functionally, potential transporter for phosphate. The polypeptide is Putative phosphate permease MT2339 (Mycobacterium tuberculosis (strain CDC 1551 / Oshkosh)).